The chain runs to 517 residues: Heat shock 70-related protein 5 (517 aa).

Belongs to the heat shock protein 70 family.

Its function is as follows. May function in protein folding and assembly, and disassembly of protein complexes. In Dictyostelium discoideum (Social amoeba), this protein is Heat shock 70-related protein 5.